The primary structure comprises 314 residues: Protein REGULATOR OF FATTY ACID COMPOSITION 3, chloroplastic (314 aa).

Residues 1–47 (MESLLHASSSLVSLRPRIDGRDSFINPSRVCLNPSLGRRGSKPLPLV) constitute a chloroplast transit peptide. Disordered regions lie at residues 49–73 (AAKKKKSKKDDNHNFSARPDEATGP) and 214–314 (AITE…NVGG). A compositionally biased stretch (basic and acidic residues) spans 56 to 69 (KKDDNHNFSARPDE). 2 stretches are compositionally biased toward acidic residues: residues 233–269 (EYYDDDEEEEIEEDEDEGEGEDEEDADNIEYEVDDDG) and 277–294 (GDEEEGEEEEDGASEQEE). The span at 295 to 308 (GQDKSTNGRRETRR) shows a compositional bias: basic and acidic residues.

It belongs to the bacterial ribosomal protein bS6 family. In terms of assembly, interacts with CFM3B/SPRT2 in plastids. Expressed ubiquitously in roots, leaves, stems, flower buds, flowers and siliques.

The protein resides in the plastid. The protein localises to the chloroplast. Prevents non-specific action of the splicing factor CFM3b during plastid rRNA biogenesis to improve the accuracy of plastid rRNA processing. Required for plastid functions such as photosynthesis, intracellular distribution, plastid rRNAs biosynthesis and plastid gene expression in roots. Involved in a sucrose-conditional process important for the organization of root lateral and apical meristems (e.g. establishment of RAM from pericycle and symplasmic connectivity), and subsequent primary and lateral roots development. Modulates C18 unsaturated fatty acid metabolism. In Arabidopsis thaliana (Mouse-ear cress), this protein is Protein REGULATOR OF FATTY ACID COMPOSITION 3, chloroplastic.